Consider the following 389-residue polypeptide: Indole-3-acetate monooxygenase (389 aa).

This sequence belongs to the HpaH/HsaA monooxygenase family.

It catalyses the reaction (indol-3-yl)acetate + NADH + O2 + H(+) = 2-hydroxy-(1H-indol-3-yl)acetate + NAD(+) + H2O. The catalysed reaction is indole + NADH + O2 + H(+) = indoxyl + NAD(+) + H2O. In terms of biological role, involved in the degradation of the plant hormone indole-3-acetic acid (IAA). Catalyzes the first step of the pathway, the conversion of IAA to 2-hydroxy-IAA (2-OH-IAA). Can also convert indole to indoxyl, which spontaneously dimerizes in the presence of oxygen to form the blue pigment indigo. The polypeptide is Indole-3-acetate monooxygenase (Pseudomonas putida (Arthrobacter siderocapsulatus)).